Reading from the N-terminus, the 356-residue chain is Homoserine O-succinyltransferase (356 aa).

Cys-146 serves as the catalytic Acyl-thioester intermediate. Substrate is bound by residues Lys-167 and Ser-196. His-239 (proton acceptor) is an active-site residue. Glu-241 is a catalytic residue. Position 253 (Arg-253) interacts with substrate.

Belongs to the MetA family.

The protein resides in the cytoplasm. It catalyses the reaction L-homoserine + succinyl-CoA = O-succinyl-L-homoserine + CoA. The protein operates within amino-acid biosynthesis; L-methionine biosynthesis via de novo pathway; O-succinyl-L-homoserine from L-homoserine: step 1/1. In terms of biological role, transfers a succinyl group from succinyl-CoA to L-homoserine, forming succinyl-L-homoserine. This Thioalkalivibrio nitratireducens (strain DSM 14787 / UNIQEM 213 / ALEN2) protein is Homoserine O-succinyltransferase.